A 258-amino-acid chain; its full sequence is Ferredoxin--NADP reductase (258 aa).

Positions 2–102 (SNLYTERVLS…RKPTGTLVHD (101 aa)) constitute an FAD-binding FR-type domain. Arginine 51, alanine 52, tyrosine 53, serine 54, phenylalanine 67, isoleucine 69, leucine 76, threonine 77, and threonine 117 together coordinate FAD. Valine 144, arginine 145, threonine 181, arginine 182, arginine 190, serine 223, glutamate 227, phenylalanine 255, and glutamate 257 together coordinate NADP(+). Residues phenylalanine 255, glutamate 257, and lysine 258 each coordinate FAD.

This sequence belongs to the ferredoxin--NADP reductase type 1 family. Monomer. Requires FAD as cofactor.

The enzyme catalyses 2 reduced [2Fe-2S]-[ferredoxin] + NADP(+) + H(+) = 2 oxidized [2Fe-2S]-[ferredoxin] + NADPH. Functionally, transports electrons between ferredoxin and NADPH. Provides electrons to heme oxygenase (pigA) allowing anaerobic heme degradation. Provides electrons necessary to reduce and mobilize Fe(3+) in a heterooligomeric bacterioferritin (BFR) complex to Fe(2+). Reduction of Fe(3+) in a pure FtnA BFR does not require Bfd. Reduction of Fe(3+) in a pure BfrB BFR does require Bfd. This chain is Ferredoxin--NADP reductase, found in Pseudomonas aeruginosa (strain ATCC 15692 / DSM 22644 / CIP 104116 / JCM 14847 / LMG 12228 / 1C / PRS 101 / PAO1).